The chain runs to 110 residues: Large ribosomal subunit protein uL22 (110 aa).

Belongs to the universal ribosomal protein uL22 family. Part of the 50S ribosomal subunit.

In terms of biological role, this protein binds specifically to 23S rRNA; its binding is stimulated by other ribosomal proteins, e.g. L4, L17, and L20. It is important during the early stages of 50S assembly. It makes multiple contacts with different domains of the 23S rRNA in the assembled 50S subunit and ribosome. Functionally, the globular domain of the protein is located near the polypeptide exit tunnel on the outside of the subunit, while an extended beta-hairpin is found that lines the wall of the exit tunnel in the center of the 70S ribosome. In Aggregatibacter actinomycetemcomitans (Actinobacillus actinomycetemcomitans), this protein is Large ribosomal subunit protein uL22.